Reading from the N-terminus, the 503-residue chain is Glutamate/gamma-aminobutyrate antiporter (503 aa).

An L-glutamate-binding site is contributed by 33-43 (LHLVFFLLLGG). A run of 7 helical transmembrane segments spans residues 35 to 55 (LVFF…LCAA), 153 to 173 (FVVG…AYFI), 194 to 214 (VSTL…EASA), 232 to 252 (ILLV…VAAV), 366 to 386 (LTVV…FVLI), 407 to 427 (IIAG…FVPP), and 440 to 460 (MILL…YELH).

It belongs to the amino acid-polyamine-organocation (APC) superfamily. Glutamate:GABA antiporter (GGA) (TC 2.A.3.7) family.

It localises to the cell membrane. The enzyme catalyses 4-aminobutanoate(in) + L-glutamate(out) = 4-aminobutanoate(out) + L-glutamate(in). Functionally, involved in glutaminase-dependent acid resistance. Exchanges extracellular glutamate (Glu) for intracellular gamma-aminobutyric acid (GABA) under acidic conditions. This chain is Glutamate/gamma-aminobutyrate antiporter (gadC), found in Lactococcus lactis subsp. lactis (strain IL1403) (Streptococcus lactis).